The chain runs to 160 residues: MIP18 family protein F45G2.10 (160 aa).

The tract at residues 1–32 (MGQERLDNANPTLFDSKPRHRPVTGTERDESV) is disordered.

The protein belongs to the MIP18 family.

May play a role in chromosome segregation through establishment of sister chromatid cohesion. The sequence is that of MIP18 family protein F45G2.10 from Caenorhabditis elegans.